Consider the following 161-residue polypeptide: Transcriptional repressor NrdR (161 aa).

The segment covering 1 to 11 (MRCPSCSSLDT) has biased composition (polar residues). Residues 1-20 (MRCPSCSSLDTQVKDSRPTE) are disordered. Residues 3–34 (CPSCSSLDTQVKDSRPTEDSAVIRRRRVCMAC) fold into a zinc finger. The 91-residue stretch at 49 to 139 (LTVIKRNGRR…VYRNFREAKD (91 aa)) folds into the ATP-cone domain.

The protein belongs to the NrdR family. Zn(2+) is required as a cofactor.

In terms of biological role, negatively regulates transcription of bacterial ribonucleotide reductase nrd genes and operons by binding to NrdR-boxes. In Rhodopseudomonas palustris (strain BisB18), this protein is Transcriptional repressor NrdR.